A 318-amino-acid chain; its full sequence is Cobalamin biosynthesis protein CobD (318 aa).

Transmembrane regions (helical) follow at residues V56 to M76, E78 to G98, V153 to A173, L204 to I224, and M298 to I318.

It belongs to the CobD/CbiB family.

The protein resides in the cell membrane. Its pathway is cofactor biosynthesis; adenosylcobalamin biosynthesis. Functionally, converts cobyric acid to cobinamide by the addition of aminopropanol on the F carboxylic group. The sequence is that of Cobalamin biosynthesis protein CobD from Yersinia enterocolitica serotype O:8 / biotype 1B (strain NCTC 13174 / 8081).